A 201-amino-acid chain; its full sequence is Lymphotoxin-alpha (201 aa).

The first 27 residues, 1–27 (MTSSGVLCLLGALSLQVLLLQPPGAQG), serve as a signal peptide directing secretion. The interval 23-52 (PGAQGAPNPDNSHSSSPAPPQTAQHLSQKS) is disordered. The segment covering 31–51 (PDNSHSSSPAPPQTAQHLSQK) has biased composition (polar residues). A THD domain is found at 60-201 (PAAHLVGDPS…SSVFFGAFAL (142 aa)). Asn-93 is a glycosylation site (N-linked (GlcNAc...) asparagine). Cys-117 and Cys-152 are joined by a disulfide.

It belongs to the tumor necrosis factor family. As to quaternary structure, homotrimer, and heterotrimer of either two LTB and one LTA subunits or (less prevalent) two LTA and one LTB subunits. Interacts with TNFRSF14.

The protein localises to the secreted. It is found in the membrane. Functionally, cytokine that in its homotrimeric form binds to TNFRSF1A/TNFR1, TNFRSF1B/TNFBR and TNFRSF14/HVEM. In its heterotrimeric form with LTB binds to TNFRSF3/LTBR. Lymphotoxin is produced by lymphocytes and is cytotoxic for a wide range of tumor cells in vitro and in vivo. This is Lymphotoxin-alpha (LTA) from Notamacropus eugenii (Tammar wallaby).